A 463-amino-acid chain; its full sequence is MSLYSDGLSSDQYFLVNFIMSNYLGPDVYSDNPRCSSSQRLARGLPPYTLMHIGSSSLTVSQLQNLYYNVLRNAKSSLLLHPDMIYMYLKGYLPLEPSGKFPQFTHFFPTNLHPQKRYSPSHEIVKGIVVIDDPAVGFINKEELQRFRCLSRLDDLKIDRVTSLSPRVNLDESRETEQDCSRNGDATANGVVTNEDYNSSGELQETCKRKEGEDAVASCVISEPERLSGDIPESQGMKQDCSRNGESAFSGIVSDQDYYSFVKLPETCKRKNKEEEAVTGHAVSGTSKTPERFRETYKRRRFKNSSKKATNKNGETLMEREKTDKPIPFSSEMKESDAEPSVVTTGTASKETLGSSVGVVDIGVNKVAYFFQVALPGVRKDYGEFSCEIESDGKVILEGSTTRGEKNIKRHSRVFEMNIRKLCPPGPFKLCFNLPGPVDPRLFSPNFRSDGIFEGVIIRHKNS.

Basic and acidic residues predominate over residues 169-182; that stretch reads NLDESRETEQDCSR. Disordered regions lie at residues 169–199 and 300–347; these read NLDESRETEQDCSRNGDATANGVVTNEDYNS and RRFK…TTGT. Residues 184–199 are compositionally biased toward polar residues; the sequence is GDATANGVVTNEDYNS. Residues 300 to 310 are compositionally biased toward basic residues; the sequence is RRFKNSSKKAT.

In terms of assembly, interacts with MBD7 (via C-terminus), IDM1 and IDM2. Part of a complex made of MBD7, IDM1, IDM2 and IDM3.

It localises to the nucleus. In terms of biological role, acts as an anti-silencing factor that prevents DNA hypermethylation and gene repression. The sequence is that of Increased DNA methylation 3 from Arabidopsis thaliana (Mouse-ear cress).